A 360-amino-acid chain; its full sequence is Phenylalanine--tRNA ligase alpha subunit (360 aa).

E260 is a Mg(2+) binding site.

Belongs to the class-II aminoacyl-tRNA synthetase family. Phe-tRNA synthetase alpha subunit type 1 subfamily. As to quaternary structure, tetramer of two alpha and two beta subunits. Mg(2+) serves as cofactor.

The protein localises to the cytoplasm. It carries out the reaction tRNA(Phe) + L-phenylalanine + ATP = L-phenylalanyl-tRNA(Phe) + AMP + diphosphate + H(+). This chain is Phenylalanine--tRNA ligase alpha subunit, found in Rhizobium etli (strain CIAT 652).